Consider the following 380-residue polypeptide: Cystathionine gamma-synthase (380 aa).

Lysine 195 is modified (N6-(pyridoxal phosphate)lysine).

Belongs to the trans-sulfuration enzymes family. In terms of assembly, homotetramer. Requires pyridoxal 5'-phosphate as cofactor.

It localises to the cytoplasm. It catalyses the reaction O-succinyl-L-homoserine + L-cysteine = L,L-cystathionine + succinate + H(+). In terms of biological role, catalyzes the formation of L-cystathionine from O-succinyl-L-homoserine (OSHS) and L-cysteine, via a gamma-replacement reaction. In the absence of thiol, catalyzes gamma-elimination to form 2-oxobutanoate, succinate and ammonia. In Helicobacter pylori (strain J99 / ATCC 700824) (Campylobacter pylori J99), this protein is Cystathionine gamma-synthase (metB).